The sequence spans 71 residues: uncharacterized protein (71 aa).

Positions 1–10 are enriched in basic residues; sequence MHRKKRKKEK. Residues 1–20 are disordered; it reads MHRKKRKKEKKRTEKDNTTN. A helical transmembrane segment spans residues 21 to 43; the sequence is LPPLFLFPCSLSLPTLLAPVHYI.

Its subcellular location is the membrane. This is an uncharacterized protein from Saccharomyces cerevisiae (strain ATCC 204508 / S288c) (Baker's yeast).